The primary structure comprises 418 residues: MDYLHVYNNNQAHVPRTPPGRQCLSPVLPPIILALDQQHSLTFGYSSPRCLPTPILPSMSTNTPVHWSQQVVTIPVAVRNHAAMMPIITPMTSPRPQFEATAPSPPLAPVAIKLPDLKLPPSPVPSTVEDRVSHPILPKIVIGNGGGRDVERDSTEELIRKIPNYIGCAKTKAQLSKVRSGKQLIACAQEYHHPVNKDEIENINNILNFRDFIFKHPKSSFEFLCTLSFEQFVRVYSFISFIYRTKKINKNKYELVCEMNVHEQLSNKRIQRTRTPEKYKIHLICESKLILTFNHCTKTVKFESINGGHCHPISANHIIKPSLFLTHCINKCYQTVSDPTDLKLALRDALEALDHERIGLSFLKRRHFKCSHQASSLSNASATLKKQEDHDTFGVHTGIIHTANFFMFNASSDIFQRN.

This is an uncharacterized protein from Saccharomyces cerevisiae (strain ATCC 204508 / S288c) (Baker's yeast).